Here is a 99-residue protein sequence, read N- to C-terminus: Class II hydrophobin 3 (99 aa).

Positions 1–18 (MRIDILATAALLAQLASA) are cleaved as a signal peptide. 3 cysteine pairs are disulfide-bonded: Cys31/Cys79, Cys40/Cys70, and Cys41/Cys53.

The protein belongs to the cerato-ulmin hydrophobin family. As to quaternary structure, homodimer. Homodimers further self-assemble to form highly ordered films at water-air interfaces through intermolecular interactions.

The protein localises to the secreted. The protein resides in the cell wall. Functionally, aerial growth, conidiation, and dispersal of filamentous fungi in the environment rely upon a capability of their secreting small amphipathic proteins called hydrophobins (HPBs) with low sequence identity. Class I can self-assemble into an outermost layer of rodlet bundles on aerial cell surfaces, conferring cellular hydrophobicity that supports fungal growth, development and dispersal; whereas Class II form highly ordered films at water-air interfaces through intermolecular interactions but contribute nothing to the rodlet structure. Hyd3 is a class II hydrophobin required for barley root colonization. Hyd1 and Hyd3 are jointly required for conidial hydrophobicity and dispersal, but seem not to be involved in mycelia hydrophobicity. Inhibits conidial germination in environments not suitable for mycelial growth. Plays probably a role in intraspecific signaling or hyphal fusion. The sequence is that of Class II hydrophobin 3 from Bionectria ochroleuca (Gliocladium roseum).